The following is a 277-amino-acid chain: Ras suppressor protein 1 (277 aa).

The segment at 1–23 (MSKSLKKLVEESREKNQPEVDMS) is disordered. S2 is modified (N-acetylserine). The segment covering 7 to 23 (KLVEESREKNQPEVDMS) has biased composition (basic and acidic residues). LRR repeat units follow at residues 41-63 (HITQLVLSHNKLTTVPPNIAELK), 64-85 (NLEVLNFFNNQIEELPTQISSL), 87-109 (KLKHLNLGMNRLNTLPRGFGSLP), 110-133 (ALEVLDLTYNNLNENSLPGNFFYL), 135-156 (TLRALYLSDNDFEILPPDIGKL), 158-179 (KLQILSLRDNDLISLPKEIGEL), and 181-202 (QLKELHIQGNRLTVLPPELGNL). Residues 250–277 (MQANPEPPKKNNDKSKKISRKPLAAKNK) are disordered. Residues 256-265 (PPKKNNDKSK) show a composition bias toward basic and acidic residues.

In terms of biological role, potentially plays a role in the Ras signal transduction pathway. Capable of suppressing v-Ras transformation in vitro. This chain is Ras suppressor protein 1 (RSU1), found in Bos taurus (Bovine).